A 290-amino-acid chain; its full sequence is 4-diphosphocytidyl-2-C-methyl-D-erythritol kinase (290 aa).

The active site involves Lys-8. 92–102 (PISAGLAGGST) lines the ATP pocket. Asp-134 is a catalytic residue.

The protein belongs to the GHMP kinase family. IspE subfamily.

It catalyses the reaction 4-CDP-2-C-methyl-D-erythritol + ATP = 4-CDP-2-C-methyl-D-erythritol 2-phosphate + ADP + H(+). It participates in isoprenoid biosynthesis; isopentenyl diphosphate biosynthesis via DXP pathway; isopentenyl diphosphate from 1-deoxy-D-xylulose 5-phosphate: step 3/6. In terms of biological role, catalyzes the phosphorylation of the position 2 hydroxy group of 4-diphosphocytidyl-2C-methyl-D-erythritol. The chain is 4-diphosphocytidyl-2-C-methyl-D-erythritol kinase from Caldicellulosiruptor saccharolyticus (strain ATCC 43494 / DSM 8903 / Tp8T 6331).